The primary structure comprises 151 residues: D-aminoacyl-tRNA deacylase (151 aa).

A Gly-cisPro motif, important for rejection of L-amino acids motif is present at residues 136–137 (GP).

The protein belongs to the DTD family. As to quaternary structure, homodimer.

It is found in the cytoplasm. The enzyme catalyses glycyl-tRNA(Ala) + H2O = tRNA(Ala) + glycine + H(+). It catalyses the reaction a D-aminoacyl-tRNA + H2O = a tRNA + a D-alpha-amino acid + H(+). Its function is as follows. An aminoacyl-tRNA editing enzyme that deacylates mischarged D-aminoacyl-tRNAs. Also deacylates mischarged glycyl-tRNA(Ala), protecting cells against glycine mischarging by AlaRS. Acts via tRNA-based rather than protein-based catalysis; rejects L-amino acids rather than detecting D-amino acids in the active site. By recycling D-aminoacyl-tRNA to D-amino acids and free tRNA molecules, this enzyme counteracts the toxicity associated with the formation of D-aminoacyl-tRNA entities in vivo and helps enforce protein L-homochirality. This is D-aminoacyl-tRNA deacylase from Lactococcus lactis subsp. cremoris (strain MG1363).